The primary structure comprises 91 residues: uncharacterized protein (91 aa).

A helical transmembrane segment spans residues 50–70 (FGFFGGPFIGGLAGGLIGSAL).

It is found in the cell membrane. This is an uncharacterized protein from Bacillus subtilis (strain 168).